Consider the following 311-residue polypeptide: HPr kinase/phosphorylase (311 aa).

Catalysis depends on residues His-138 and Lys-159. Residue 153–160 (GDSGIGKS) coordinates ATP. Ser-160 contributes to the Mg(2+) binding site. The Proton acceptor; for phosphorylation activity. Proton donor; for dephosphorylation activity role is filled by Asp-177. The segment at 201–210 (LEIRGVGIID) is important for the catalytic mechanism of both phosphorylation and dephosphorylation. Position 202 (Glu-202) interacts with Mg(2+). The active site involves Arg-243. An important for the catalytic mechanism of dephosphorylation region spans residues 264-269 (PVKTGR).

Belongs to the HPrK/P family. Homohexamer. Requires Mg(2+) as cofactor.

The catalysed reaction is [HPr protein]-L-serine + ATP = [HPr protein]-O-phospho-L-serine + ADP + H(+). The enzyme catalyses [HPr protein]-O-phospho-L-serine + phosphate + H(+) = [HPr protein]-L-serine + diphosphate. Catalyzes the ATP- as well as the pyrophosphate-dependent phosphorylation of a specific serine residue in HPr, a phosphocarrier protein of the phosphoenolpyruvate-dependent sugar phosphotransferase system (PTS). HprK/P also catalyzes the pyrophosphate-producing, inorganic phosphate-dependent dephosphorylation (phosphorolysis) of seryl-phosphorylated HPr (P-Ser-HPr). The two antagonistic activities of HprK/P are regulated by several intracellular metabolites, which change their concentration in response to the absence or presence of rapidly metabolisable carbon sources (glucose, fructose, etc.) in the growth medium. Therefore, by controlling the phosphorylation state of HPr, HPrK/P is a sensor enzyme that plays a major role in the regulation of carbon metabolism and sugar transport: it mediates carbon catabolite repression (CCR), and regulates PTS-catalyzed carbohydrate uptake and inducer exclusion. The chain is HPr kinase/phosphorylase from Streptococcus gordonii (strain Challis / ATCC 35105 / BCRC 15272 / CH1 / DL1 / V288).